The chain runs to 444 residues: C4-dicarboxylate transport protein 2 (444 aa).

A run of 6 helical transmembrane segments spans residues 23 to 43 (ILYV…WLWP), 61 to 81 (LIKM…IAHI), 95 to 115 (LVYF…VANV), 162 to 182 (GEIL…MGLG), 198 to 218 (AMFG…FGAM), and 236 to 256 (LIAT…GIIA).

The protein belongs to the dicarboxylate/amino acid:cation symporter (DAACS) (TC 2.A.23) family.

The protein resides in the cell inner membrane. Its function is as follows. Responsible for the transport of dicarboxylates such as succinate, fumarate, and malate from the periplasm across the membrane. This chain is C4-dicarboxylate transport protein 2, found in Bradyrhizobium diazoefficiens (strain JCM 10833 / BCRC 13528 / IAM 13628 / NBRC 14792 / USDA 110).